Consider the following 249-residue polypeptide: uncharacterized protein (249 aa).

This is an uncharacterized protein from Caenorhabditis elegans.